A 378-amino-acid chain; its full sequence is Putative zinc finger protein 302L (378 aa).

The C2H2-type; degenerate zinc finger occupies Ile-3 to Lys-25.

It belongs to the IIV-6 302L family.

The sequence is that of Putative zinc finger protein 302L from Invertebrate iridescent virus 6 (IIV-6).